The chain runs to 548 residues: ATP synthase subunit alpha (548 aa).

172-179 (GDRKTGKT) lines the ATP pocket. A disordered region spans residues 511–548 (FETTSGESVVPDENVEAMSEDDVEKESVKVRKPAPKKK). Over residues 523 to 534 (ENVEAMSEDDVE) the composition is skewed to acidic residues.

The protein belongs to the ATPase alpha/beta chains family. F-type ATPases have 2 components, CF(1) - the catalytic core - and CF(0) - the membrane proton channel. CF(1) has five subunits: alpha(3), beta(3), gamma(1), delta(1), epsilon(1). CF(0) has three main subunits: a(1), b(2) and c(9-12). The alpha and beta chains form an alternating ring which encloses part of the gamma chain. CF(1) is attached to CF(0) by a central stalk formed by the gamma and epsilon chains, while a peripheral stalk is formed by the delta and b chains.

It localises to the cell membrane. It catalyses the reaction ATP + H2O + 4 H(+)(in) = ADP + phosphate + 5 H(+)(out). In terms of biological role, produces ATP from ADP in the presence of a proton gradient across the membrane. The alpha chain is a regulatory subunit. The chain is ATP synthase subunit alpha from Mycobacterium sp. (strain JLS).